The following is a 569-amino-acid chain: Urease subunit alpha (569 aa).

Residues 131 to 569 (GGIDSHIHFI…LPLAQRYFLF (439 aa)) form the Urease domain. Positions 136, 138, and 219 each coordinate Ni(2+). K219 is subject to N6-carboxylysine. H221 is a binding site for substrate. 2 residues coordinate Ni(2+): H248 and H274. H322 functions as the Proton donor in the catalytic mechanism. D362 is a binding site for Ni(2+).

It belongs to the metallo-dependent hydrolases superfamily. Urease alpha subunit family. As to quaternary structure, heterotrimer of UreA (gamma), UreB (beta) and UreC (alpha) subunits. Three heterotrimers associate to form the active enzyme. Ni cation is required as a cofactor. Post-translationally, carboxylation allows a single lysine to coordinate two nickel ions.

Its subcellular location is the cytoplasm. It catalyses the reaction urea + 2 H2O + H(+) = hydrogencarbonate + 2 NH4(+). It functions in the pathway nitrogen metabolism; urea degradation; CO(2) and NH(3) from urea (urease route): step 1/1. The protein is Urease subunit alpha of Herpetosiphon aurantiacus (strain ATCC 23779 / DSM 785 / 114-95).